The following is a 296-amino-acid chain: Nucleotide-binding protein spyM18_0713 (296 aa).

13–20 lines the ATP pocket; sequence GMSGAGKT. GTP is bound at residue 63-66; sequence DMRS.

This sequence belongs to the RapZ-like family.

In terms of biological role, displays ATPase and GTPase activities. This Streptococcus pyogenes serotype M18 (strain MGAS8232) protein is Nucleotide-binding protein spyM18_0713.